The following is a 396-amino-acid chain: Tryptophan synthase beta chain (396 aa).

Position 86 is an N6-(pyridoxal phosphate)lysine (K86).

The protein belongs to the TrpB family. In terms of assembly, tetramer of two alpha and two beta chains. It depends on pyridoxal 5'-phosphate as a cofactor.

It carries out the reaction (1S,2R)-1-C-(indol-3-yl)glycerol 3-phosphate + L-serine = D-glyceraldehyde 3-phosphate + L-tryptophan + H2O. The protein operates within amino-acid biosynthesis; L-tryptophan biosynthesis; L-tryptophan from chorismate: step 5/5. Its function is as follows. The beta subunit is responsible for the synthesis of L-tryptophan from indole and L-serine. The sequence is that of Tryptophan synthase beta chain from Sodalis glossinidius (strain morsitans).